A 933-amino-acid chain; its full sequence is Serine/threonine-protein kinase PknD (933 aa).

Residues Y4 to L291 enclose the Protein kinase domain. Residues I10–V18 and K33 contribute to the ATP site. The Proton acceptor role is filled by D138.

The protein belongs to the protein kinase superfamily. Ser/Thr protein kinase family. Autophosphorylated on serine and threonine residues.

The catalysed reaction is L-seryl-[protein] + ATP = O-phospho-L-seryl-[protein] + ADP + H(+). The enzyme catalyses L-threonyl-[protein] + ATP = O-phospho-L-threonyl-[protein] + ADP + H(+). Its function is as follows. Together with the serine/threonine kinase Pkn1, may play a role in the specific interactions with host proteins during intracellular growth. This chain is Serine/threonine-protein kinase PknD, found in Chlamydia felis (strain Fe/C-56) (Chlamydophila felis).